The following is a 690-amino-acid chain: Serotransferrin (690 aa).

A signal peptide spans 1-17 (MKPLLLLTLLGCLAAAL). 2 Transferrin-like domains span residues 24–329 (VKWC…SLKK) and 340–670 (IKWC…SLRK). Cysteines 27 and 49 form a disulfide. Positions 73 and 103 each coordinate Fe(3+). Disulfide bonds link C126/C206, C171/C185, and C234/C248. Hydrogencarbonate is bound by residues T128, K132, A134, and G135. Y200 provides a ligand contact to Fe(3+). H256 lines the Fe(3+) pocket. Disulfide bonds link C343/C379 and C353/C370. Fe(3+)-binding residues include D394 and Y429. Intrachain disulfides connect C404/C682, C419/C643, C452/C530, C476/C671, C486/C499, C496/C513, and C570/C584. T454, R458, A460, and G461 together coordinate hydrogencarbonate. Y524 lines the Fe(3+) pocket. H592 contributes to the Fe(3+) binding site.

This sequence belongs to the transferrin family. Monomer.

It is found in the secreted. Functionally, transferrins are iron binding transport proteins which can bind two Fe(3+) ions in association with the binding of an anion, usually bicarbonate. The protein is Serotransferrin (tf) of Oryzias latipes (Japanese rice fish).